A 173-amino-acid chain; its full sequence is Co-chaperone protein HscB homolog (173 aa).

A J domain is found at C5–I77.

Belongs to the HscB family. As to quaternary structure, interacts with HscA and stimulates its ATPase activity.

Co-chaperone involved in the maturation of iron-sulfur cluster-containing proteins. Seems to help targeting proteins to be folded toward HscA. In Pseudomonas entomophila (strain L48), this protein is Co-chaperone protein HscB homolog.